Consider the following 170-residue polypeptide: Cathelicidin antimicrobial peptide (170 aa).

The signal sequence occupies residues 1 to 30 (MKTQRDSPSLGRWSLVLLLLGLVMPLAIVA). A propeptide spans 31–131 (QVLSYQEAVL…DISCDKDNRR (101 aa)) (cathelin-like domain (CLD)). Intrachain disulfides connect cysteine 86/cysteine 97 and cysteine 108/cysteine 125. Positions 150 to 162 (LKKVGQKIKDFLG) are active core.

The protein belongs to the cathelicidin family. As to quaternary structure, monomer, homodimer or homotrimer (in vitro). Oligomerizes as tetra- or hexamer in solution (in vitro). Proteolytically cleaved by proteinase PRTN3 into antibacterial peptide LL-37. Proteolytically cleaved by cathepsin CTSG and neutrophil elastase ELANE. In terms of processing, resistant to proteolytic degradation in solution, and when bound to both zwitterionic (mimicking mammalian membranes) and negatively charged membranes (mimicking bacterial membranes). Post-translationally, after secretion onto the skin surface, the CAMP gene product is processed by a serine protease-dependent mechanism into multiple novel antimicrobial peptides distinct from and shorter than cathelicidin LL-37. These peptides show enhanced antimicrobial action, acquiring the ability to kill skin pathogens such as S.aureus, E.coli and C.albicans. These peptides have lost the ability to stimulate CXCL8/IL8 release from keratinocytes. The peptides act synergistically, killing bacteria at lower concentrations when present together, and maintain activity at increased salt condition.

The protein localises to the secreted. Its subcellular location is the vesicle. Antimicrobial protein that is an integral component of the innate immune system. Binds to bacterial lipopolysaccharides (LPS). Acts via neutrophil N-formyl peptide receptors to enhance the release of CXCL2. Postsecretory processing generates multiple cathelicidin antimicrobial peptides with various lengths which act as a topical antimicrobial defense in sweat on skin. The unprocessed precursor form, cathelicidin antimicrobial peptide, inhibits the growth of Gram-negative E.coli and E.aerogenes with efficiencies comparable to that of the mature peptide LL-37 (in vitro). Functionally, antimicrobial peptide that is an integral component of the innate immune system. Binds to bacterial lipopolysaccharides (LPS). Causes membrane permeabilization by forming transmembrane pores (in vitro). Causes lysis of E.coli. Exhibits antimicrobial activity against Gram-negative bacteria such as P.aeruginosa, S.typhimurium, E.aerogenes, E.coli and P.syringae, Gram-positive bacteria such as L.monocytogenes, S.epidermidis, S.pyogenes and S.aureus, as well as vancomycin-resistant enterococci (in vitro). Exhibits antimicrobial activity against methicillin-resistant S.aureus, P.mirabilis, and C.albicans in low-salt media, but not in media containing 100 mM NaCl (in vitro). Forms chiral supramolecular assemblies with quinolone signal (PQS) molecules of P.aeruginosa, which may lead to interference of bacterial quorum signaling and perturbance of bacterial biofilm formation. May form supramolecular fiber-like assemblies on bacterial membranes. Induces cytokine and chemokine producation as well as TNF/TNFA and CSF2/GMCSF production in normal human keratinocytes. Exhibits hemolytic activity against red blood cells. In terms of biological role, exhibits antimicrobial activity against E.coli and B.megaterium (in vitro). The protein is Cathelicidin antimicrobial peptide of Papio papio (Guinea baboon).